A 559-amino-acid polypeptide reads, in one-letter code: Transmembrane E3 ubiquitin-protein ligase FLY2 (559 aa).

The signal sequence occupies residues 1 to 29 (MNNLGNFGVWGFGFFSLSIWFAVLQQANG). The Lumenal portion of the chain corresponds to 30 to 259 (LRPIRETARS…TSINVEVYYN (230 aa)). A helical transmembrane segment spans residues 260-280 (KAVNYTLMVTFVSFLQVLLLI). Residues 281 to 294 (RQMEHSNTQSGAAK) lie on the Cytoplasmic side of the membrane. Residues 295–315 (VSIVMIGQQAIMDSYLCLLHL) form a helical membrane-spanning segment. The Lumenal portion of the chain corresponds to 316-318 (TAG). Residues 319–339 (ILVESLFNAFATAAFFKFVVF) traverse the membrane as a helical segment. The Cytoplasmic portion of the chain corresponds to 340–370 (SIFEMRYLLSIWKATRPSTSGEGWETMRREL). Residues 371 to 391 (SFLYSRFYGILLGGILLMYEF) form a helical membrane-spanning segment. The Lumenal segment spans residues 392–394 (HNY). The helical transmembrane segment at 395–415 (MRPILLLMYSFWIPQIVANVV) threads the bilayer. Over 416–423 (RDSRKPLH) the chain is Cytoplasmic. A helical transmembrane segment spans residues 424-444 (PYYILGMTVTRLAIPLYVFGC). The Lumenal segment spans residues 445 to 458 (PKNFMRVEPSKAWC). Residues 459 to 479 (VSLCAFMGFQAGVLLLQHYFG) form a helical membrane-spanning segment. At 480–559 (SRCFVPRKLL…PTCRRPLPPA (80 aa)) the chain is on the cytoplasmic side. Residues 509–553 (CVICMTTIDLRHRINDCMVTPCEHIFHSGCLQRWMDIKMECPTCR) form an RING-type; atypical zinc finger.

As to expression, highly expressed in stems. Expressed in root xylem and seed coat.

It is found in the endomembrane system. It carries out the reaction S-ubiquitinyl-[E2 ubiquitin-conjugating enzyme]-L-cysteine + [acceptor protein]-L-lysine = [E2 ubiquitin-conjugating enzyme]-L-cysteine + N(6)-ubiquitinyl-[acceptor protein]-L-lysine.. The protein operates within protein modification; protein ubiquitination. E3 ubiquitin-protein ligase that may be involved in xylem development. The sequence is that of Transmembrane E3 ubiquitin-protein ligase FLY2 from Arabidopsis thaliana (Mouse-ear cress).